The following is a 316-amino-acid chain: tRNA-cytidine(32) 2-sulfurtransferase (316 aa).

Residues 1–31 form a disordered region; sequence MGAVIDDSMPGPGADATGTGPSDARTERETR. Low complexity predominate over residues 10-21; sequence PGPGADATGTGP. The PP-loop motif motif lies at 62–67; sequence SGGKDS. [4Fe-4S] cluster-binding residues include Cys-137, Cys-140, and Cys-228.

It belongs to the TtcA family. As to quaternary structure, homodimer. Mg(2+) is required as a cofactor. Requires [4Fe-4S] cluster as cofactor.

Its subcellular location is the cytoplasm. It carries out the reaction cytidine(32) in tRNA + S-sulfanyl-L-cysteinyl-[cysteine desulfurase] + AH2 + ATP = 2-thiocytidine(32) in tRNA + L-cysteinyl-[cysteine desulfurase] + A + AMP + diphosphate + H(+). It functions in the pathway tRNA modification. Catalyzes the ATP-dependent 2-thiolation of cytidine in position 32 of tRNA, to form 2-thiocytidine (s(2)C32). The sulfur atoms are provided by the cysteine/cysteine desulfurase (IscS) system. The sequence is that of tRNA-cytidine(32) 2-sulfurtransferase from Verminephrobacter eiseniae (strain EF01-2).